Reading from the N-terminus, the 700-residue chain is Polyribonucleotide nucleotidyltransferase (700 aa).

Residues D487 and D493 each coordinate Mg(2+). Positions 554–613 constitute a KH domain; that stretch reads PRLLTIKIHPDKIRDVIGKGGSTIQAITKDTGTQIDIQDDGTIVIASVNNAAAREAKRRI. The region spanning 623–691 is the S1 motif domain; that stretch reads GRIYEGKVAK…KQGRIRLSIK (69 aa).

Belongs to the polyribonucleotide nucleotidyltransferase family. In terms of assembly, component of the RNA degradosome, which is a multiprotein complex involved in RNA processing and mRNA degradation. The cofactor is Mg(2+).

The protein resides in the cytoplasm. The catalysed reaction is RNA(n+1) + phosphate = RNA(n) + a ribonucleoside 5'-diphosphate. Functionally, involved in mRNA degradation. Catalyzes the phosphorolysis of single-stranded polyribonucleotides processively in the 3'- to 5'-direction. In Xylella fastidiosa (strain M12), this protein is Polyribonucleotide nucleotidyltransferase.